The primary structure comprises 142 residues: ATP synthase epsilon chain (142 aa).

The protein belongs to the ATPase epsilon chain family. As to quaternary structure, F-type ATPases have 2 components, CF(1) - the catalytic core - and CF(0) - the membrane proton channel. CF(1) has five subunits: alpha(3), beta(3), gamma(1), delta(1), epsilon(1). CF(0) has three main subunits: a, b and c.

It localises to the cell inner membrane. Functionally, produces ATP from ADP in the presence of a proton gradient across the membrane. This chain is ATP synthase epsilon chain, found in Shewanella halifaxensis (strain HAW-EB4).